Consider the following 859-residue polypeptide: Leucine--tRNA ligase (859 aa).

A 'HIGH' region motif is present at residues 42-52; the sequence is PYPSGRLHMGH. The short motif at 618 to 622 is the 'KMSKS' region element; that stretch reads KMSKS. Lysine 621 provides a ligand contact to ATP.

Belongs to the class-I aminoacyl-tRNA synthetase family.

The protein localises to the cytoplasm. The enzyme catalyses tRNA(Leu) + L-leucine + ATP = L-leucyl-tRNA(Leu) + AMP + diphosphate. The polypeptide is Leucine--tRNA ligase (Shewanella sp. (strain ANA-3)).